We begin with the raw amino-acid sequence, 289 residues long: ATP synthase subunit a (289 aa).

A run of 6 helical transmembrane segments spans residues 43 to 63 (AFHV…VLLF), 103 to 123 (VIAP…AVDL), 160 to 180 (FSVF…GGFI), 193 to 213 (IFVQ…TLIA), 232 to 252 (VFIL…GLGV), and 259 to 279 (AVFH…LTIV).

This sequence belongs to the ATPase A chain family. F-type ATPases have 2 components, CF(1) - the catalytic core - and CF(0) - the membrane proton channel. CF(1) has five subunits: alpha(3), beta(3), gamma(1), delta(1), epsilon(1). CF(0) has three main subunits: a(1), b(2) and c(9-12). The alpha and beta chains form an alternating ring which encloses part of the gamma chain. CF(1) is attached to CF(0) by a central stalk formed by the gamma and epsilon chains, while a peripheral stalk is formed by the delta and b chains.

It is found in the cell inner membrane. In terms of biological role, key component of the proton channel; it plays a direct role in the translocation of protons across the membrane. In Pseudomonas fluorescens (strain Pf0-1), this protein is ATP synthase subunit a.